Here is a 451-residue protein sequence, read N- to C-terminus: MKMERKNVWHHRKKEEIEAFSKEYMEFMSKAKTERMTVKEIKRILDESGFVPLEDFAGDPMNMTVYAVNRGKAIAAFRVVDDLKRGLNLVVAHIDSPRLDFKPNPLIEDEQIALFKTHYYGGIKKYHWLSIPLEIHGVLFKNDGTEIEIHIGDKPEDPVFTIPDLLPHLDKEDAKISEKFKGENLMLIAGTIPLSGEEKEAVKTNVLKILNEMYGITEEDFVSGEIEVVPAFSPREVGMDRSLIGAYGQDDRICAYTALRALLSANPEKSIGVIFFDKEEIGSDGNTGAKARFYLKALRQILKMQGAKDSEFVLDEVLENTSVISGDVCAAVNPPYKDVHDLHNAPKLGYGVALVKYTGARGKYSTNDAHAEFVARVRKVLNEQGVIWQVATLGKVDQGGGGTIAKFFAERGSDVIDMGPALLGMHSPFEISSKADLFETYVAYRSLMEKL.

Zn(2+)-binding residues include histidine 93, histidine 168, and histidine 426.

It belongs to the peptidase M18 family. It depends on Zn(2+) as a cofactor.

This Thermotoga maritima (strain ATCC 43589 / DSM 3109 / JCM 10099 / NBRC 100826 / MSB8) protein is Probable M18 family aminopeptidase 1 (apeA).